We begin with the raw amino-acid sequence, 144 residues long: Ribonuclease VapC37 (144 aa).

The PINc domain maps to 3-137; it reads IVDANVLLYA…DFGRFEGVRW (135 aa). Mg(2+)-binding residues include D5 and D90.

This sequence belongs to the PINc/VapC protein family. Mg(2+) serves as cofactor.

Its subcellular location is the secreted. In terms of biological role, probable toxic component of a type II toxin-antitoxin (TA) system. An RNase. Upon expression in M.smegmatis inhibits colony formation. The putative cognate antitoxin is VapB37. The protein is Ribonuclease VapC37 of Mycobacterium tuberculosis (strain ATCC 25618 / H37Rv).